The following is a 151-amino-acid chain: Large ribosomal subunit protein bL9 (151 aa).

It belongs to the bacterial ribosomal protein bL9 family.

In terms of biological role, binds to the 23S rRNA. This chain is Large ribosomal subunit protein bL9, found in Acidobacterium capsulatum (strain ATCC 51196 / DSM 11244 / BCRC 80197 / JCM 7670 / NBRC 15755 / NCIMB 13165 / 161).